The chain runs to 241 residues: Small ribosomal subunit protein uS2 (241 aa).

Belongs to the universal ribosomal protein uS2 family.

The protein is Small ribosomal subunit protein uS2 of Glaesserella parasuis serovar 5 (strain SH0165) (Haemophilus parasuis).